Here is a 509-residue protein sequence, read N- to C-terminus: ATP synthase subunit alpha (509 aa).

An ATP-binding site is contributed by 169-176; that stretch reads GDRQTGKT.

The protein belongs to the ATPase alpha/beta chains family. F-type ATPases have 2 components, CF(1) - the catalytic core - and CF(0) - the membrane proton channel. CF(1) has five subunits: alpha(3), beta(3), gamma(1), delta(1), epsilon(1). CF(0) has three main subunits: a(1), b(2) and c(9-12). The alpha and beta chains form an alternating ring which encloses part of the gamma chain. CF(1) is attached to CF(0) by a central stalk formed by the gamma and epsilon chains, while a peripheral stalk is formed by the delta and b chains.

Its subcellular location is the cell inner membrane. It carries out the reaction ATP + H2O + 4 H(+)(in) = ADP + phosphate + 5 H(+)(out). Its function is as follows. Produces ATP from ADP in the presence of a proton gradient across the membrane. The alpha chain is a regulatory subunit. This is ATP synthase subunit alpha from Brucella melitensis biotype 1 (strain ATCC 23456 / CCUG 17765 / NCTC 10094 / 16M).